Consider the following 419-residue polypeptide: MIDLKLLREDPDVVRRSQLSRGEDPALVDALLTADTARRTAISTADSLRAEQKAASKGVGGASPEERPALLQRAKDLAEQVKAAEATQSETEAAFTAAHMAIPNVILDGVPAGGEDDYAVLEVVGEPRAIDNPKDHLELGESLGLIDMARGAKVAGSRFYFLTGQGALLQLGLLQLALRLAVDNGFIPMIPPVLVRPEVMAGTGFLGAHADEVYRLEADDLYLVGTSEVPMAGYHADEIVDLSEGPLRYAGWSSCFRREAGSYGKDTRGIIRVHQFDKVEGFVYCTPADAEAEHQRLLAWQREMLAQIEVPYRVIDVAAGDLGASAARKFDCEAWVPTQGTYRELTSTSNCTTFQARRLATRYRDANGKPQIAATLNGTLGTTRWLVSILENHQQPDGSVRVPAALVGFVGTEVLEPKG.

Thr-226–Glu-228 lines the L-serine pocket. Residues Arg-257–Glu-259 and Val-273 contribute to the ATP site. An L-serine-binding site is contributed by Glu-280. Glu-344–Ser-347 contributes to the ATP binding site. Thr-379 contributes to the L-serine binding site.

This sequence belongs to the class-II aminoacyl-tRNA synthetase family. Type-1 seryl-tRNA synthetase subfamily. In terms of assembly, homodimer. The tRNA molecule binds across the dimer.

The protein resides in the cytoplasm. It carries out the reaction tRNA(Ser) + L-serine + ATP = L-seryl-tRNA(Ser) + AMP + diphosphate + H(+). It catalyses the reaction tRNA(Sec) + L-serine + ATP = L-seryl-tRNA(Sec) + AMP + diphosphate + H(+). It functions in the pathway aminoacyl-tRNA biosynthesis; selenocysteinyl-tRNA(Sec) biosynthesis; L-seryl-tRNA(Sec) from L-serine and tRNA(Sec): step 1/1. Catalyzes the attachment of serine to tRNA(Ser). Is also able to aminoacylate tRNA(Sec) with serine, to form the misacylated tRNA L-seryl-tRNA(Sec), which will be further converted into selenocysteinyl-tRNA(Sec). The protein is Serine--tRNA ligase of Mycobacterium marinum (strain ATCC BAA-535 / M).